The sequence spans 462 residues: Argininosuccinate lyase (462 aa).

It belongs to the lyase 1 family. Argininosuccinate lyase subfamily.

Its subcellular location is the cytoplasm. It catalyses the reaction 2-(N(omega)-L-arginino)succinate = fumarate + L-arginine. It functions in the pathway amino-acid biosynthesis; L-arginine biosynthesis; L-arginine from L-ornithine and carbamoyl phosphate: step 3/3. This Thermus thermophilus (strain ATCC BAA-163 / DSM 7039 / HB27) protein is Argininosuccinate lyase.